The sequence spans 317 residues: SVP1-like protein 2 (317 aa).

WD repeat units lie at residues 119–159 (AHST…KMAE) and 164–203 (VDHA…NAPY).

The protein belongs to the WD repeat PROPPIN family.

The protein resides in the vacuole membrane. Its subcellular location is the cytoplasmic vesicle membrane. In terms of biological role, involved in mitochondrial or peroxisomal functions and amino acid signaling pathways. The sequence is that of SVP1-like protein 2 (hsv2) from Emericella nidulans (strain FGSC A4 / ATCC 38163 / CBS 112.46 / NRRL 194 / M139) (Aspergillus nidulans).